The following is a 310-amino-acid chain: Protein LRATD2 (310 aa).

Residues 1 to 76 (MGNQVEKLTH…PPPQPQPYDP (76 aa)) form a disordered region. Residues 54–64 (PDGGGLPDGGD) show a composition bias toward gly residues. A compositionally biased stretch (pro residues) spans 65–74 (GPPPPQPQPY). Positions 122–217 (VEFVSQAQYP…CRYGKREFKI (96 aa)) constitute an LRAT domain. The segment at 274–310 (HPAEPEEGDSNVARTTPPPGRPPAPSSEEEDGEAVAH) is disordered. Residues 289 to 298 (TPPPGRPPAP) are compositionally biased toward pro residues. Over residues 300–310 (SEEEDGEAVAH) the composition is skewed to acidic residues.

This sequence belongs to the LRATD family. As to expression, expressed in esophageal squamous cell carcinomas.

This chain is Protein LRATD2, found in Homo sapiens (Human).